A 625-amino-acid chain; its full sequence is TORTIFOLIA1-like protein 4 (625 aa).

Residues 1–34 (MSVHGRFPASPPISLSPSSSSTSPSSQSPSTPPD) form a disordered region. A compositionally biased stretch (low complexity) spans 12 to 29 (PISLSPSSSSTSPSSQSP). HEAT repeat units follow at residues 69-106 (DSFSPFLNCIHNTDSSVKSPVRKQCVALLSVLSRYHGD), 110-147 (PHLAKMVSTVIRRLRDPDSSVRSACAVATADMSAHVTR), 149-186 (PFASVAKPLIETLIQEGDSNLQIGAALCLAASVDAATD), 190-227 (EQLRKSLPKIGKLLKSDGFKAKAALLSAVGSIITAGGA), and 230-268 (KPVLDWLVPVLIEFLSSEDWAARKSAAEALGKVATAEDL). The interval 391-466 (SVDNKGPHFT…VKNCKDDVEE (76 aa)) is disordered. Composition is skewed to basic and acidic residues over residues 404–413 (KSSEETEEKA), 420–434 (IIKHTISEKSREDSK), and 455–466 (DSVKNCKDDVEE). Ser475 carries the phosphoserine modification. The disordered stretch occupies residues 582-625 (GMRESTDTNNGQRGGSVFQKRSRRDQFQDCMHTTLQKPTTRLST). Positions 612–625 (MHTTLQKPTTRLST) are enriched in polar residues.

This Arabidopsis thaliana (Mouse-ear cress) protein is TORTIFOLIA1-like protein 4.